The following is a 418-amino-acid chain: Ankyrin repeat domain-containing protein 61 (418 aa).

ANK repeat units lie at residues 27 to 57, 74 to 103, 131 to 160, 166 to 195, 199 to 228, 233 to 272, 276 to 305, and 309 to 342; these read ALHS…NQPL, QPIF…DPEV, TRIQ…QVNA, NKHS…QVNA, SSMT…NVNC, TGNT…QVNA, EGQT…NVNI, and NGES…PLRL.

This is Ankyrin repeat domain-containing protein 61 (Ankrd61) from Rattus norvegicus (Rat).